Here is a 197-residue protein sequence, read N- to C-terminus: Stanniocalcin-2 (197 aa).

Residues 1 to 20 (TDAXNPPEGPQDRGSQQKGR) are disordered.

This sequence belongs to the stanniocalcin family. As to quaternary structure, homodimer; disulfide-linked.

It is found in the secreted. Has an anti-hypocalcemic action on calcium and phosphate homeostasis. This Cavia porcellus (Guinea pig) protein is Stanniocalcin-2 (STC2).